Here is a 646-residue protein sequence, read N- to C-terminus: ATP-dependent zinc metalloprotease FtsH (646 aa).

At 1 to 4 the chain is on the cytoplasmic side; the sequence is MTRS. A helical membrane pass occupies residues 5-25; it reads LLWQMVIVLGAILMVNYVLTT. Residues 26–120 lie on the Periplasmic side of the membrane; that stretch reads LTPQTQEPVV…VRPESKPSPW (95 aa). A helical membrane pass occupies residues 121-141; that stretch reads ATAMIYMLPWLLIVGVWWFVI. Over 142–646 the chain is Cytoplasmic; the sequence is KGMRTRQGPG…GELAGGAVEG (505 aa). 216-223 contributes to the ATP binding site; the sequence is GPPGTGKT. Residue histidine 437 coordinates Zn(2+). Glutamate 438 is a catalytic residue. Residues histidine 441 and aspartate 513 each coordinate Zn(2+).

In the central section; belongs to the AAA ATPase family. This sequence in the C-terminal section; belongs to the peptidase M41 family. Homohexamer. Requires Zn(2+) as cofactor.

The protein resides in the cell inner membrane. In terms of biological role, acts as a processive, ATP-dependent zinc metallopeptidase for both cytoplasmic and membrane proteins. Plays a role in the quality control of integral membrane proteins. The sequence is that of ATP-dependent zinc metalloprotease FtsH from Syntrophotalea carbinolica (strain DSM 2380 / NBRC 103641 / GraBd1) (Pelobacter carbinolicus).